The chain runs to 1138 residues: Pesticidal crystal protein Cry7Aa (1138 aa).

It belongs to the delta endotoxin family.

Promotes colloidosmotic lysis by binding to the midgut epithelial cells of Coleoptera. This protein is not toxic in its natural form. It is highly toxic to Colorado potato beetle larvae after an in vitro solubilization and trypsin activation step. The polypeptide is Pesticidal crystal protein Cry7Aa (cry7Aa) (Bacillus thuringiensis).